Here is a 163-residue protein sequence, read N- to C-terminus: NAD(P)H-quinone oxidoreductase subunit I, chloroplastic (163 aa).

4Fe-4S ferredoxin-type domains lie at 55–84 (GRIH…VDWR) and 95–124 (LNYS…MTEE). [4Fe-4S] cluster contacts are provided by C64, C67, C70, C74, C104, C107, C110, and C114.

The protein belongs to the complex I 23 kDa subunit family. In terms of assembly, NDH is composed of at least 16 different subunits, 5 of which are encoded in the nucleus. It depends on [4Fe-4S] cluster as a cofactor.

Its subcellular location is the plastid. The protein localises to the chloroplast thylakoid membrane. It carries out the reaction a plastoquinone + NADH + (n+1) H(+)(in) = a plastoquinol + NAD(+) + n H(+)(out). It catalyses the reaction a plastoquinone + NADPH + (n+1) H(+)(in) = a plastoquinol + NADP(+) + n H(+)(out). Functionally, NDH shuttles electrons from NAD(P)H:plastoquinone, via FMN and iron-sulfur (Fe-S) centers, to quinones in the photosynthetic chain and possibly in a chloroplast respiratory chain. The immediate electron acceptor for the enzyme in this species is believed to be plastoquinone. Couples the redox reaction to proton translocation, and thus conserves the redox energy in a proton gradient. The polypeptide is NAD(P)H-quinone oxidoreductase subunit I, chloroplastic (ndhI) (Phoenix dactylifera (Date palm)).